A 248-amino-acid polypeptide reads, in one-letter code: Triosephosphate isomerase (248 aa).

9 to 11 contributes to the substrate binding site; that stretch reads NWK. His92 (electrophile) is an active-site residue. Glu164 serves as the catalytic Proton acceptor. Residues Gly170, Ser209, and 230–231 contribute to the substrate site; that span reads GG.

It belongs to the triosephosphate isomerase family. Homodimer.

Its subcellular location is the cytoplasm. It carries out the reaction D-glyceraldehyde 3-phosphate = dihydroxyacetone phosphate. The protein operates within carbohydrate biosynthesis; gluconeogenesis. It participates in carbohydrate degradation; glycolysis; D-glyceraldehyde 3-phosphate from glycerone phosphate: step 1/1. Involved in the gluconeogenesis. Catalyzes stereospecifically the conversion of dihydroxyacetone phosphate (DHAP) to D-glyceraldehyde-3-phosphate (G3P). The protein is Triosephosphate isomerase of Thiobacillus denitrificans (strain ATCC 25259 / T1).